Here is a 558-residue protein sequence, read N- to C-terminus: Dihydroxy-acid dehydratase (558 aa).

[2Fe-2S] cluster is bound at residue C50. D82 provides a ligand contact to Mg(2+). C123 serves as a coordination point for [2Fe-2S] cluster. Residues D124 and K125 each coordinate Mg(2+). An N6-carboxylysine modification is found at K125. C195 is a binding site for [2Fe-2S] cluster. E447 is a binding site for Mg(2+). The active-site Proton acceptor is the S472.

This sequence belongs to the IlvD/Edd family. Homodimer. [2Fe-2S] cluster is required as a cofactor. It depends on Mg(2+) as a cofactor.

It carries out the reaction (2R)-2,3-dihydroxy-3-methylbutanoate = 3-methyl-2-oxobutanoate + H2O. The catalysed reaction is (2R,3R)-2,3-dihydroxy-3-methylpentanoate = (S)-3-methyl-2-oxopentanoate + H2O. It functions in the pathway amino-acid biosynthesis; L-isoleucine biosynthesis; L-isoleucine from 2-oxobutanoate: step 3/4. Its pathway is amino-acid biosynthesis; L-valine biosynthesis; L-valine from pyruvate: step 3/4. Functionally, functions in the biosynthesis of branched-chain amino acids. Catalyzes the dehydration of (2R,3R)-2,3-dihydroxy-3-methylpentanoate (2,3-dihydroxy-3-methylvalerate) into 2-oxo-3-methylpentanoate (2-oxo-3-methylvalerate) and of (2R)-2,3-dihydroxy-3-methylbutanoate (2,3-dihydroxyisovalerate) into 2-oxo-3-methylbutanoate (2-oxoisovalerate), the penultimate precursor to L-isoleucine and L-valine, respectively. The protein is Dihydroxy-acid dehydratase of Saccharolobus islandicus (strain L.S.2.15 / Lassen #1) (Sulfolobus islandicus).